A 284-amino-acid chain; its full sequence is Bifunctional protein FolD (284 aa).

Residues Gly-166 to Ser-168 and Ile-232 contribute to the NADP(+) site.

Belongs to the tetrahydrofolate dehydrogenase/cyclohydrolase family. In terms of assembly, homodimer.

It carries out the reaction (6R)-5,10-methylene-5,6,7,8-tetrahydrofolate + NADP(+) = (6R)-5,10-methenyltetrahydrofolate + NADPH. It catalyses the reaction (6R)-5,10-methenyltetrahydrofolate + H2O = (6R)-10-formyltetrahydrofolate + H(+). The protein operates within one-carbon metabolism; tetrahydrofolate interconversion. Functionally, catalyzes the oxidation of 5,10-methylenetetrahydrofolate to 5,10-methenyltetrahydrofolate and then the hydrolysis of 5,10-methenyltetrahydrofolate to 10-formyltetrahydrofolate. The polypeptide is Bifunctional protein FolD (Shewanella halifaxensis (strain HAW-EB4)).